Reading from the N-terminus, the 956-residue chain is Matrilin-2 (956 aa).

An N-terminal signal peptide occupies residues 1–23; sequence MEKMLVGCLLMLGQLFLVLPVDG. One can recognise a VWFA 1 domain in the interval 57 to 232; it reads DLVFIIDSSR…SQIESLTSVF (176 aa). Asn-221 carries an N-linked (GlcNAc...) asparagine glycan. 10 consecutive EGF-like domains span residues 238-278, 279-319, 320-360, 361-401, 402-442, 443-483, 484-524, 525-565, 566-606, and 607-647; these read TVHM…KTCR, IQDL…KRCT, AVDY…KTCS, KIDY…KTCR, RINY…KTCS, RVDH…KTCS, RADY…KTCA, KLDS…KTCR, RKDV…KRCR, and RKNV…KHCK. Disulfide bonds link Cys-242–Cys-253, Cys-249–Cys-262, Cys-264–Cys-277, Cys-283–Cys-294, Cys-290–Cys-303, Cys-305–Cys-318, Cys-324–Cys-335, Cys-331–Cys-344, Cys-346–Cys-359, Cys-365–Cys-376, Cys-372–Cys-385, Cys-387–Cys-400, Cys-406–Cys-417, Cys-413–Cys-426, Cys-428–Cys-441, Cys-447–Cys-458, Cys-454–Cys-467, Cys-469–Cys-482, Cys-488–Cys-499, Cys-495–Cys-508, Cys-510–Cys-523, Cys-529–Cys-540, Cys-536–Cys-549, Cys-551–Cys-564, Cys-570–Cys-581, Cys-577–Cys-590, Cys-592–Cys-605, Cys-611–Cys-622, Cys-618–Cys-631, and Cys-633–Cys-646. The region spanning 655 to 830 is the VWFA 2 domain; sequence DLVFVIDGSK…STMGEISEKL (176 aa). The N-linked (GlcNAc...) asparagine glycan is linked to Asn-890. Residues 917 to 955 are a coiled coil; that stretch reads KCENLILFQNVANEEVRKLTQRLEEMTQRMEALENRLKY.

As to expression, detected in a variety of organs, including calvaria, uterus, heart and brain, as well as fibroblast and osteoblast cell lines.

The protein localises to the secreted. In terms of biological role, involved in matrix assembly. The protein is Matrilin-2 (Matn2) of Mus musculus (Mouse).